Consider the following 466-residue polypeptide: Purple acid phosphatase 6 (466 aa).

An N-terminal signal peptide occupies residues 1 to 20 (MKNLVIFAFLFLSITTVING). N88 carries an N-linked (GlcNAc...) asparagine glycan. D164 contacts Fe cation. N-linked (GlcNAc...) asparagine glycosylation occurs at N172. 2 residues coordinate Fe cation: D192 and Y195. D192 contacts Zn(2+). Residues N229 and H314 each coordinate Zn(2+). N229 provides a ligand contact to substrate. The Proton donor role is filled by H324. Residue H351 participates in Zn(2+) binding. 351 to 353 (HVH) provides a ligand contact to substrate. H353 is a Fe cation binding site. N-linked (GlcNAc...) asparagine glycosylation is found at N367 and N424.

Belongs to the metallophosphoesterase superfamily. Purple acid phosphatase family. As to quaternary structure, homodimer. The cofactor is Fe cation. Zn(2+) serves as cofactor. In terms of tissue distribution, specifically expressed in flowers.

It is found in the secreted. It catalyses the reaction a phosphate monoester + H2O = an alcohol + phosphate. The protein is Purple acid phosphatase 6 (PAP6) of Arabidopsis thaliana (Mouse-ear cress).